We begin with the raw amino-acid sequence, 137 residues long: Nucleoside diphosphate kinase (137 aa).

Residues K9, F57, R85, T91, R102, and N112 each contribute to the ATP site. The active-site Pros-phosphohistidine intermediate is H115.

This sequence belongs to the NDK family. As to quaternary structure, homotetramer. It depends on Mg(2+) as a cofactor.

It localises to the cytoplasm. It carries out the reaction a 2'-deoxyribonucleoside 5'-diphosphate + ATP = a 2'-deoxyribonucleoside 5'-triphosphate + ADP. The enzyme catalyses a ribonucleoside 5'-diphosphate + ATP = a ribonucleoside 5'-triphosphate + ADP. Major role in the synthesis of nucleoside triphosphates other than ATP. The ATP gamma phosphate is transferred to the NDP beta phosphate via a ping-pong mechanism, using a phosphorylated active-site intermediate. This Campylobacter lari (strain RM2100 / D67 / ATCC BAA-1060) protein is Nucleoside diphosphate kinase.